The following is a 944-amino-acid chain: E3 ubiquitin-protein ligase JMJ24 (944 aa).

Disordered regions lie at residues 20 to 40 (QTRS…GIPD) and 77 to 103 (ANSA…YSEG). The WRC domain occupies 38 to 83 (IPDDLRCKRSDGKQWRCTAMSMADKTVCEKHYIQAKKRAANSAFRA). Positions 73–80 (KKRAANSA) match the Nuclear localization signal 1 motif. Residues 217-269 (GEICHQCQRKDRERIISCLKCNQRAFCHNCLSARYSEISLEEVEKVCPACRGL) form a PHD-type; atypical zinc finger. The Zn(2+) site is built by cysteine 220, cysteine 223, cysteine 234, cysteine 237, cysteine 243, cysteine 246, cysteine 263, and cysteine 266. A Nuclear localization signal 2 motif is present at residues 323-330 (EKRLREVE). The JmjC domain maps to 621-873 (PRLGLLNVAA…ESARLAEEIR (253 aa)). The segment covering 685 to 703 (ERVRKTKPVPEEPDQKMSE) has biased composition (basic and acidic residues). The disordered stretch occupies residues 685 to 715 (ERVRKTKPVPEEPDQKMSENESLLSPEQKLR).

This sequence belongs to the JARID1 histone demethylase family. As to quaternary structure, homodimer. Interacts with RDR2. Binds to CMT3. Associates with the E2 ubiquitin-conjugating enzyme UBC10. Self-ubiquitinates. Expressed in inflorescences, flowers, roots, siliques, leaves and stems, especially in the vasculature (mainly phloem), with highest levels in floral organs.

It is found in the nucleus. The catalysed reaction is S-ubiquitinyl-[E2 ubiquitin-conjugating enzyme]-L-cysteine + [acceptor protein]-L-lysine = [E2 ubiquitin-conjugating enzyme]-L-cysteine + N(6)-ubiquitinyl-[acceptor protein]-L-lysine.. Functionally, binds histone H3 but seems to have lost demethylase activity probably due to its inability to bind iron Fe(2+). Possesses E3 ubiquitin ligase activity and targets directly CMT3 for proteasomal degradation to initiate destabilization of the heterochromatic state (e.g. CHG cytosine methylation and H3K9me2) of endogenous silenced loci. Required for the removal of repressive H3K9me2 histone marks to facilitate the transcription of AtSN1, AtMu1c, solo LTR and SDC, thus counteracting their transcriptional silencing. Mainly required to promote the basal level transcription of silenced loci such as TE and repeats targeted by RNA-dependent DNA methylation (RdDM) for silencing, a specialized branch of the RNA interference (RNAi) pathway. Also cooperates with RNAi pathways for gene silencing both by contributing to the production of 24-nt siRNA to initiate RdDM and by recruiting RDR2 to enable local transcripts to make dsRNA. Antagonizes histone H3K9 demethylase IBM1/JMJ25 function. The chain is E3 ubiquitin-protein ligase JMJ24 from Arabidopsis thaliana (Mouse-ear cress).